The sequence spans 526 residues: GMP synthase [glutamine-hydrolyzing] (526 aa).

The Glutamine amidotransferase type-1 domain occupies 14-208 (SILIVDFGSQ…VHDICGLAGD (195 aa)). C91 functions as the Nucleophile in the catalytic mechanism. Catalysis depends on residues H182 and E184. In terms of domain architecture, GMPS ATP-PPase spans 209-401 (WTMAEFRQTK…LGMPDVFVDR (193 aa)). 236-242 (SGGVDSS) provides a ligand contact to ATP.

Homodimer.

The catalysed reaction is XMP + L-glutamine + ATP + H2O = GMP + L-glutamate + AMP + diphosphate + 2 H(+). It participates in purine metabolism; GMP biosynthesis; GMP from XMP (L-Gln route): step 1/1. Catalyzes the synthesis of GMP from XMP. This Zymomonas mobilis subsp. mobilis (strain ATCC 31821 / ZM4 / CP4) protein is GMP synthase [glutamine-hydrolyzing].